An 830-amino-acid polypeptide reads, in one-letter code: MVEEENIRVVRCGGSELNFRRAVFSADSKYIFCVSGDFVKVYSTVTEECVHILHGHRNLVTGIQLNPNNHLQLYSCSLDGTIKLWDYIDGILIKTFIVGCKLHALFTLAQAEDSVFVIVNKEKPDIFQLVSVKLPKSSSQEVEAKELSFVLDYINQSPKCIAFGNEGVYVAAVREFYLSVYFFKKKTTSRFTLSSSRNKKHAKNNFTCVACHPTEDCIASGHMDGKIRLWRNFYDDKKYTYTCLHWHHDMVMDLAFSVTGTSLLSGGRESVLVEWRDATEKNKEFLPRLGATIEHISVSPAGDLFCTSHSDNKIIIIHRNLEASAVIQGLVKDRSIFTGLMIDPRTKALVLNGKPGHLQFYSLQSDKQLYNLDIIQQEYINDYGLIQIELTKAAFGCFGNWLATVEQRQEKETELELQMKLWMYNKKTQGFILNTKINMPHEDCITALCFCNAEKSEQPTLVTASKDGYFKVWILTDDSDIYKKAVGWTCDFVGSYHKYQATNCCFSEDGSLLAVSFEEIVTIWDSVTWELKCTFCQRAGKIRHLCFGRLTCSKYLLGATENGILCCWNLLSCALEWNAKLNVRVMEPDPNSENIAAISQSSVGSDLFVFKPSEPRPLYIQKGISREKVQWGVFVPRDVPESFTSEAYQWLNRSQFYFLTKSQSLLTFSTKSPEEKLTPTSKQLLAEESLPTTPFYFILGKHRQQQDEKLNETLENELVQLPLTENIPAISELLHTPAHVLPSAAFLCSMFVNSLLLSKETKSAKEIPEDVDMEEEKESEDSDEENDFTEKVQDTSNTGLGEDIIHQLSKSEEKELRKFRKIDYSWIAAL.

WD repeat units follow at residues 4 to 43, 47 to 86, 90 to 131, 145 to 184, 193 to 231, 237 to 276, 279 to 318, 324 to 362, and 376 to 423; these read EENIRVVRCGGSELNFRRAVFSADSKYIFCVSGDFVKVYS, EECVHILHGHRNLVTGIQLNPNNHLQLYSCSLDGTIKLWD, GILI…QLVS, KELSFVLDYINQSPKCIAFGNEGVYVAAVREFYLSVYFFK, LSSSRNKKHAKNNFTCVACHPTEDCIASGHMDGKIRLWR, KKYTYTCLHWHHDMVMDLAFSVTGTSLLSGGRESVLVEWR, TEKNKEFLPRLGATIEHISVSPAGDLFCTSHSDNKIIIIH, SAVIQGLVKDRSIFTGLMIDPRTKALVLNGKPGHLQFYS, and QQEY…KLWM. Lys123 is covalently cross-linked (Glycyl lysine isopeptide (Lys-Gly) (interchain with G-Cter in SUMO2)). Lys427 participates in a covalent cross-link: Glycyl lysine isopeptide (Lys-Gly) (interchain with G-Cter in SUMO2). 4 WD repeats span residues 430-474, 487-525, 529-569, and 574-611; these read GFIL…KVWI, GWTCDFVGSYHKYQATNCCFSEDGSLLAVSFEEIVTIWD, WELK…CCWN, and ALEWNAKLNVRVMEPDPNSENIAAISQSSVGSDLFVFK. N6-acetyllysine is present on Lys466. Phosphoserine is present on residues Ser664 and Ser672. Residue Lys676 forms a Glycyl lysine isopeptide (Lys-Gly) (interchain with G-Cter in SUMO2) linkage. Residues 763-806 are disordered; sequence SAKEIPEDVDMEEEKESEDSDEENDFTEKVQDTSNTGLGEDIIH. Positions 769–787 are enriched in acidic residues; it reads EDVDMEEEKESEDSDEEND. Phosphoserine is present on residues Ser779, Ser782, Ser796, and Ser811.

Component of the proposed t-UTP subcomplex of the ribosomal small subunit (SSU) processome. SSU processome is composed of more than 70 proteins and the RNA chaperone small nucleolar RNA (snoRNA) U3.

Its subcellular location is the nucleus. The protein resides in the nucleolus. Functionally, ribosome biogenesis factor. Part of the small subunit (SSU) processome, first precursor of the small eukaryotic ribosomal subunit. During the assembly of the SSU processome in the nucleolus, many ribosome biogenesis factors, an RNA chaperone and ribosomal proteins associate with the nascent pre-rRNA and work in concert to generate RNA folding, modifications, rearrangements and cleavage as well as targeted degradation of pre-ribosomal RNA by the RNA exosome. Involved in nucleolar processing of pre-18S ribosomal RNA. Required for optimal pre-ribosomal RNA transcription by RNA polymerase I. The protein is WD repeat-containing protein 75 of Homo sapiens (Human).